We begin with the raw amino-acid sequence, 380 residues long: Alkaline protease (380 aa).

The first 27 residues, 1–27 (MKKPLGKIVASTALLISVAFSSSIASA), serve as a signal peptide directing secretion. The propeptide occupies 28 to 112 (AEEAKEKYLI…EEDAEVTTMA (85 aa)). The 78-residue stretch at 34–111 (KYLIGFNEQE…IEEDAEVTTM (78 aa)) folds into the Inhibitor I9 domain. Q113 serves as a coordination point for Ca(2+). Positions 116–379 (PWGISRVQAP…SGLVNAEAAT (264 aa)) constitute a Peptidase S8 domain. The active-site Charge relay system is D143. D151 serves as a coordination point for Ca(2+). The active-site Charge relay system is H173. Residues L184, N186, I188, V190, A274, Y276, and A279 each coordinate Ca(2+). S326 functions as the Charge relay system in the catalytic mechanism.

Belongs to the peptidase S8 family. The cofactor is Ca(2+).

Its subcellular location is the secreted. The protein is Alkaline protease of Alkalihalobacillus alcalophilus (Bacillus alcalophilus).